A 194-amino-acid polypeptide reads, in one-letter code: Imidazoleglycerol-phosphate dehydratase (194 aa).

Belongs to the imidazoleglycerol-phosphate dehydratase family.

It is found in the cytoplasm. It catalyses the reaction D-erythro-1-(imidazol-4-yl)glycerol 3-phosphate = 3-(imidazol-4-yl)-2-oxopropyl phosphate + H2O. Its pathway is amino-acid biosynthesis; L-histidine biosynthesis; L-histidine from 5-phospho-alpha-D-ribose 1-diphosphate: step 6/9. The sequence is that of Imidazoleglycerol-phosphate dehydratase from Sulfurisphaera tokodaii (strain DSM 16993 / JCM 10545 / NBRC 100140 / 7) (Sulfolobus tokodaii).